We begin with the raw amino-acid sequence, 563 residues long: Light-independent protochlorophyllide reductase subunit B (563 aa).

Asp36 is a [4Fe-4S] cluster binding site. Asp293 serves as the catalytic Proton donor. Residue 437–438 coordinates substrate; the sequence is GM. The segment at 459-478 is disordered; that stretch reads ERREAEFGNQKVETGEPGTG.

It belongs to the ChlB/BchB/BchZ family. As to quaternary structure, protochlorophyllide reductase is composed of three subunits; BchL, BchN and BchB. Forms a heterotetramer of two BchB and two BchN subunits. [4Fe-4S] cluster is required as a cofactor.

It carries out the reaction chlorophyllide a + oxidized 2[4Fe-4S]-[ferredoxin] + 2 ADP + 2 phosphate = protochlorophyllide a + reduced 2[4Fe-4S]-[ferredoxin] + 2 ATP + 2 H2O. It participates in porphyrin-containing compound metabolism; bacteriochlorophyll biosynthesis (light-independent). Functionally, component of the dark-operative protochlorophyllide reductase (DPOR) that uses Mg-ATP and reduced ferredoxin to reduce ring D of protochlorophyllide (Pchlide) to form chlorophyllide a (Chlide). This reaction is light-independent. The NB-protein (BchN-BchB) is the catalytic component of the complex. The polypeptide is Light-independent protochlorophyllide reductase subunit B (Roseiflexus castenholzii (strain DSM 13941 / HLO8)).